Consider the following 173-residue polypeptide: uncharacterized protein (173 aa).

An N-terminal signal peptide occupies residues 1 to 25 (MPVVTAVGRRRGFAMPWVSTARSGA).

This is an uncharacterized protein from Mycobacterium bovis (strain ATCC BAA-935 / AF2122/97).